A 383-amino-acid polypeptide reads, in one-letter code: Queuine tRNA-ribosyltransferase (383 aa).

The Proton acceptor role is filled by D92. Residues 92–96, D146, Q190, and G217 contribute to the substrate site; that span reads DSGGF. An RNA binding region spans residues 248–254; that stretch reads GVGKPED. D267 serves as the catalytic Nucleophile. An RNA binding; important for wobble base 34 recognition region spans residues 272–276; that stretch reads TRNAR. 4 residues coordinate Zn(2+): C310, C312, C315, and H341.

It belongs to the queuine tRNA-ribosyltransferase family. In terms of assembly, homodimer. Within each dimer, one monomer is responsible for RNA recognition and catalysis, while the other monomer binds to the replacement base PreQ1. Zn(2+) is required as a cofactor.

The catalysed reaction is 7-aminomethyl-7-carbaguanine + guanosine(34) in tRNA = 7-aminomethyl-7-carbaguanosine(34) in tRNA + guanine. It participates in tRNA modification; tRNA-queuosine biosynthesis. Its function is as follows. Catalyzes the base-exchange of a guanine (G) residue with the queuine precursor 7-aminomethyl-7-deazaguanine (PreQ1) at position 34 (anticodon wobble position) in tRNAs with GU(N) anticodons (tRNA-Asp, -Asn, -His and -Tyr). Catalysis occurs through a double-displacement mechanism. The nucleophile active site attacks the C1' of nucleotide 34 to detach the guanine base from the RNA, forming a covalent enzyme-RNA intermediate. The proton acceptor active site deprotonates the incoming PreQ1, allowing a nucleophilic attack on the C1' of the ribose to form the product. After dissociation, two additional enzymatic reactions on the tRNA convert PreQ1 to queuine (Q), resulting in the hypermodified nucleoside queuosine (7-(((4,5-cis-dihydroxy-2-cyclopenten-1-yl)amino)methyl)-7-deazaguanosine). In Psychrobacter sp. (strain PRwf-1), this protein is Queuine tRNA-ribosyltransferase.